The primary structure comprises 401 residues: Nuclear hormone receptor family member nhr-65 (401 aa).

Positions proline 10 to phenylalanine 79 form a DNA-binding region, nuclear receptor. 2 NR C4-type zinc fingers span residues cysteine 13 to cysteine 33 and cysteine 49 to cysteine 67. The NR LBD domain occupies lysine 132–alanine 398.

It belongs to the nuclear hormone receptor family.

It localises to the nucleus. Orphan nuclear receptor. The chain is Nuclear hormone receptor family member nhr-65 (nhr-65) from Caenorhabditis elegans.